Reading from the N-terminus, the 427-residue chain is Isocitrate dehydrogenase [NADP] (427 aa).

Thr-114 is an NADP(+) binding site. 5 residues coordinate D-threo-isocitrate: Ser-123, Asn-125, Arg-129, Arg-139, and Arg-163. A Mg(2+)-binding site is contributed by Asp-317. NADP(+) contacts are provided by residues 349–355, Asn-362, Tyr-401, and Arg-405; that span reads HGTAPKY.

The protein belongs to the isocitrate and isopropylmalate dehydrogenases family. As to quaternary structure, homodimer. Requires Mg(2+) as cofactor. The cofactor is Mn(2+).

It catalyses the reaction D-threo-isocitrate + NADP(+) = 2-oxoglutarate + CO2 + NADPH. Its function is as follows. Catalyzes the oxidative decarboxylation of isocitrate to 2-oxoglutarate and carbon dioxide with the concomitant reduction of NADP(+). The polypeptide is Isocitrate dehydrogenase [NADP] (icd) (Coxiella burnetii (strain RSA 493 / Nine Mile phase I)).